We begin with the raw amino-acid sequence, 228 residues long: Probable septum site-determining protein MinC (228 aa).

It belongs to the MinC family. As to quaternary structure, interacts with MinD and FtsZ.

Cell division inhibitor that blocks the formation of polar Z ring septums. Rapidly oscillates between the poles of the cell to destabilize FtsZ filaments that have formed before they mature into polar Z rings. Prevents FtsZ polymerization. This is Probable septum site-determining protein MinC from Bacillus cytotoxicus (strain DSM 22905 / CIP 110041 / 391-98 / NVH 391-98).